Here is a 314-residue protein sequence, read N- to C-terminus: Methionyl-tRNA formyltransferase (314 aa).

(6S)-5,6,7,8-tetrahydrofolate is bound at residue 111 to 114; that stretch reads SLLP.

It belongs to the Fmt family.

It carries out the reaction L-methionyl-tRNA(fMet) + (6R)-10-formyltetrahydrofolate = N-formyl-L-methionyl-tRNA(fMet) + (6S)-5,6,7,8-tetrahydrofolate + H(+). Its function is as follows. Attaches a formyl group to the free amino group of methionyl-tRNA(fMet). The formyl group appears to play a dual role in the initiator identity of N-formylmethionyl-tRNA by promoting its recognition by IF2 and preventing the misappropriation of this tRNA by the elongation apparatus. This Coxiella burnetii (strain CbuK_Q154) (Coxiella burnetii (strain Q154)) protein is Methionyl-tRNA formyltransferase.